Here is a 225-residue protein sequence, read N- to C-terminus: Transcriptional activator protein BglJ (225 aa).

Positions 146–211 constitute an HTH luxR-type domain; that stretch reads YINQSRTLSP…GLLEAADILL (66 aa). The H-T-H motif DNA-binding region spans 170–189; it reads MTQIAEQLKRNIKTIRAHKF.

In terms of assembly, forms a complex with RcsB; genetically both BglJ and RcsB are required to relieve bgl operon repression by H-NS and by StpA.

Its function is as follows. A crytic transcriptional activator. When its expression is induced it relieves H-NS repression of the bgl operon. Acts independently of transcription factor LeuO. The sequence is that of Transcriptional activator protein BglJ (bglJ) from Escherichia coli (strain K12).